Here is a 431-residue protein sequence, read N- to C-terminus: MLQFSFQNCKTHTCYMNTSVNEHLDQDESFLRILIDTRKKIRSSYFKPQTFDEFVHCLARVRAMKRLVSICSNFDEEDNWNGVWNTLVVDGDSHASAMIDYEGLLDKCSLSRNLLELINDYAEYTTQVLPFRKIPSSDNLDSSLNLTVASPKSNLYYRYSSESPKYAKILDCPDEILQLIFSYCYDASYIEKLPFAFSYRKQRHTLIHDLPNTCLRFKKILSPRNVSFWKRLLKVHKKNPNSAVTCSESINTSAVAKFTDIPTIIPIFLDPSYQSYAAKTIHSDTSSLASSIIQTGDGTQSCDESTYIELACNLVGRCVLCNRIPKLTKFKDCITSFYRPSVATNICDQCLEAIIDFYEPVSRYKFDVMKDRLGVGYISRPGQKFPSWLSEHVQLARDEEKAFKSIYHSQGEFARSLFRLFRAQLAELCEQ.

One can recognise an F-box; atypical domain in the interval C172–D186.

Component of the E3 ubiquitin ligase Skp1-Cullin-1-F-box (SCF) complex. Interacts with skp1, cul1 and erg9.

The protein resides in the cytoplasm. Its subcellular location is the nucleus. It is found in the endoplasmic reticulum. Expression is induced during oxidative stress. Plays an essential, SCF-independent, role in the stress response to hydrogen peroxide for survival, by negatively regulating ergosterol synthesis via direct binding to the squalene synthase erg9. The polypeptide is F-box protein pof14 (pof14) (Schizosaccharomyces pombe (strain 972 / ATCC 24843) (Fission yeast)).